Reading from the N-terminus, the 411-residue chain is Glutamate dehydrogenase (411 aa).

The active site involves lysine 102.

It belongs to the Glu/Leu/Phe/Val dehydrogenases family.

The catalysed reaction is L-glutamate + NAD(+) + H2O = 2-oxoglutarate + NH4(+) + NADH + H(+). It catalyses the reaction L-glutamate + NADP(+) + H2O = 2-oxoglutarate + NH4(+) + NADPH + H(+). This chain is Glutamate dehydrogenase (GDH), found in Vitis vinifera (Grape).